A 173-amino-acid polypeptide reads, in one-letter code: MDIAIQHPWFKRALGPFYPSRLFDQFFGEGLFEYDLLPFLSSTISPYYRQSLFRTVLDSGISEVRSDRDKFVIYLDVKHFSPEDLTVKVLEDFVEIHGKHNERQDDHGYISREFHRRYRLPSNVDQSALSCSLSADGMLTFSGPKVPSGMDAGHSERAIPVSREEKPSSAPSS.

Position 1 is an N-acetylmethionine (Met1). Residues 1 to 63 are required for complex formation with BFSP1 and BFSP2; sequence MDIAIQHPWF…RTVLDSGISE (63 aa). Deamidated glutamine; partial is present on Gln6. Ser45 carries the phosphoserine modification. Gln50 is subject to Deamidated glutamine; partial. Residues 52–162 enclose the sHSP domain; it reads LFRTVLDSGI…GHSERAIPVS (111 aa). N6-acetyllysine occurs at positions 70 and 99. His100 contributes to the Zn(2+) binding site. Asn101 is modified (deamidated asparagine; partial). Residues Glu102 and His107 each contribute to the Zn(2+) site. Ser122 carries the post-translational modification Phosphoserine. Asn123 carries the deamidated asparagine; partial modification. Residues 144–173 form a disordered region; that stretch reads PKVPSGMDAGHSERAIPVSREEKPSSAPSS. Over residues 153 to 167 the composition is skewed to basic and acidic residues; it reads GHSERAIPVSREEKP. His154 provides a ligand contact to Zn(2+). Ser162 carries O-linked (GlcNAc) serine glycosylation.

The protein belongs to the small heat shock protein (HSP20) family. As to quaternary structure, heteromer composed of three CRYAA and one CRYAB subunits. Inter-subunit bridging via zinc ions enhances stability, which is crucial as there is no protein turn over in the lens. Can also form homodimers and homotetramers (dimers of dimers) which serve as the building blocks of homooligomers. Within homooligomers, the zinc-binding motif is created from residues of 3 different molecules. His-100 and Glu-102 from one molecule are ligands of the zinc ion, and His-107 and His-154 residues from additional molecules complete the site with tetrahedral coordination geometry. Part of a complex required for lens intermediate filament formation composed of BFSP1, BFSP2 and CRYAA. Acetylation at Lys-70 may increase chaperone activity. Post-translationally, undergoes age-dependent proteolytical cleavage at the C-terminus.

It localises to the cytoplasm. The protein resides in the nucleus. In terms of biological role, contributes to the transparency and refractive index of the lens. Acts as a chaperone, preventing aggregation of various proteins under a wide range of stress conditions. Required for the correct formation of lens intermediate filaments as part of a complex composed of BFSP1, BFSP2 and CRYAA. The sequence is that of Alpha-crystallin A chain (CRYAA) from Melursus ursinus (Sloth bear).